Consider the following 229-residue polypeptide: LexA repressor (229 aa).

A DNA-binding region (H-T-H motif) is located at residues 26-46 (FDEMKEALDLASKSGIHRLIT). Catalysis depends on for autocatalytic cleavage activity residues Ser-149 and Lys-187.

The protein belongs to the peptidase S24 family. In terms of assembly, homodimer.

It catalyses the reaction Hydrolysis of Ala-|-Gly bond in repressor LexA.. Its function is as follows. Represses a number of genes involved in the response to DNA damage (SOS response), including recA and lexA. In the presence of single-stranded DNA, RecA interacts with LexA causing an autocatalytic cleavage which disrupts the DNA-binding part of LexA, leading to derepression of the SOS regulon and eventually DNA repair. The polypeptide is LexA repressor (Phenylobacterium zucineum (strain HLK1)).